An 842-amino-acid chain; its full sequence is Protein P (842 aa).

The tract at residues 1–177 is terminal protein domain (TP); it reads MPLSYQHFRR…FCGSPYSWEQ (177 aa). A spacer region spans residues 178–345; the sequence is ELHHGAFLDG…YCLTHLVNLL (168 aa). Residues 186–273 are disordered; it reads DGPSRMGEES…AKNIASRSAS (88 aa). Residues 223-239 show a composition bias toward polar residues; the sequence is GPQSQQRPLDGSQQGRS. A polymerase/reverse transcriptase domain (RT) region spans residues 346-689; sequence EDWGPCTEHG…YLNLYPVARQ (344 aa). A Reverse transcriptase domain is found at 356–599; sequence RHHIRIPRTP…YSLNFMGYVI (244 aa). Mg(2+) is bound by residues Asp428, Asp550, and Asp551.

Belongs to the hepadnaviridae P protein family.

It carries out the reaction DNA(n) + a 2'-deoxyribonucleoside 5'-triphosphate = DNA(n+1) + diphosphate. The catalysed reaction is Endonucleolytic cleavage to 5'-phosphomonoester.. With respect to regulation, activated by host HSP70 and HSP40 in vitro to be able to bind the epsilon loop of the pgRNA. Because deletion of the RNase H region renders the protein partly chaperone-independent, the chaperones may be needed indirectly to relieve occlusion of the RNA-binding site by this domain. Inhibited by several reverse-transcriptase inhibitors: Lamivudine, Adefovir and Entecavir. Functionally, multifunctional enzyme that converts the viral RNA genome into dsDNA in viral cytoplasmic capsids. This enzyme displays a DNA polymerase activity that can copy either DNA or RNA templates, and a ribonuclease H (RNase H) activity that cleaves the RNA strand of RNA-DNA heteroduplexes in a partially processive 3'- to 5'-endonucleasic mode. Neo-synthesized pregenomic RNA (pgRNA) are encapsidated together with the P protein, and reverse-transcribed inside the nucleocapsid. Initiation of reverse-transcription occurs first by binding the epsilon loop on the pgRNA genome, and is initiated by protein priming, thereby the 5'-end of (-)DNA is covalently linked to P protein. Partial (+)DNA is synthesized from the (-)DNA template and generates the relaxed circular DNA (RC-DNA) genome. After budding and infection, the RC-DNA migrates in the nucleus, and is converted into a plasmid-like covalently closed circular DNA (cccDNA). The activity of P protein does not seem to be necessary for cccDNA generation, and is presumably released from (+)DNA by host nuclear DNA repair machinery. This Homo sapiens (Human) protein is Protein P.